Here is a 133-residue protein sequence, read N- to C-terminus: Small ribosomal subunit protein uS9 (133 aa).

Residues 98–113 (RKPLKTEGHLSRDPRA) are compositionally biased toward basic and acidic residues. A disordered region spans residues 98–133 (RKPLKTEGHLSRDPRAKERRKYGLKKARKAPQFSKR). Residues 114–133 (KERRKYGLKKARKAPQFSKR) are compositionally biased toward basic residues.

This sequence belongs to the universal ribosomal protein uS9 family.

The chain is Small ribosomal subunit protein uS9 from Synechococcus sp. (strain CC9902).